Consider the following 2238-residue polypeptide: MKKMMRHQVKLGILELREIMREIHNYYYLLLLDSWTKLNSVGSLIHLFFHQERFLKLFDPRIFSILLSRNLQGSPSNRYFTIKGVILFVVGVLIYRINNQNMVERKNLYLTGLFPIPMNSTGPIKDRLEEAIGSSNINRLSVLLLYFPKGKNISERYFLNPKETAGVLTITKKGSVPESNWGSRRWRNFIGVKRGNFSCPIANETVGGIDILFKDKFRKNMEFTFVYYMDDLTHNDPDWEFFYRLSTRKSENRINWNSGPLFKILVKDCISYLMSAFREKRPKGEGPESTIQSNKIRHVFHLFSIKRGTISLQNCTHFYMWQFRRDLFRSWGNNPPESSFLRNVSREISSNAWLGNKGRFFSKGRNVLSNLQYDSTGSSLVNVTDSSQLKGSEDQSIERLASIRNEDSEYHALINKREVQQLEESSMTLESDRLPKSLSGYCSTSQLFKERENPMINFMFPGEMEEFIGNPTRSVRSFCSDRWSELHLWSNPTEKSTLDHKFVKNHLSFVRGAENKEIKNLRRIITYLQKTVSIHSISSDPRWDRVPKHDPDMDSFKKNSLFFLFHRFHERNRGAYPLRHDFESEERLQEMTELFTLLISEPDLVYHKGFSFYIYIDSYGLDKKNLLNEVLNARAESKNKSLWVLSPILFRYEEIEYFFKRIRQKRVWWISCGNGLVDLKQNDDGYIRNLFNILFLMNKSDRNFEHRMQGDRKGTAIFNQRTIMKCMIKQDHTYIYKRSNGTKNFQEHLEHFLSQQKSDFKVQKRYFQVLFDQLRICLTKNLIHWFEVRKKVEKKVEKNVYKLVTFLLSKSLRFFFLPQSLHFFFIKVLRFVTEVILFLSNSFPSLCVSFGNTPIQRSEIYISELKSSNEQLCNKLFESIGFQIVHLKKLNPFLLEEFDTSNFVINVGTRSPFLLNKIPKRIFDSLPTRTNHSKYFDNKDSYFSKIFHDKDNWLNHPKPFHRSSLISSFYKANQLRFRNHLHHFLFYCNKRFPFSVEKARNTNSHFLYGQFLNILLFRKKIFSLCVGQKKHVFWSRATLSPIESQVSNIFIPKDFPQSGDEGYNLDKYFNFLIQPDPVIRRAISSIVETSGTPLTEAQKGDLERTYCKPLSDINLSDSEVNNFHEYPNFNSNMGLVHILFSGKYLSSEKHSLCLKKGAGVHKERMFTTFQRDSSFSILSETWNLFQTYLPSFFTSTGYKYLTSIFSENFSYLLSILSSRVSLFQDILGLSWRILQIRLSKMPLFLRREISSKWLHNLFLSKEMIRRKTQSSLISKHLRSTKFWEFFYSLLFLLLVAGYLVSIHFFFISRAFSELQTEFKSLKSLMTPSSAIELRKLLDKYPRSEPNSFWLKNIFLVVMEQLRDSLEEIKGFVFGLNRIGLTSGVKSIRFKNFKNKDFNIKGIGIIELILRPITRIAFSLNTRHISHTSKEIYSLIIKRKNVNGVWIDDKIESWVANSDSIHEEERKLLVQLSALTTEKRILLSLTHSDHFSKNDSGYQMIEQPGAIYLRYLVDIHQKHLMNYEFNTSCLAERRIFLAHSQTITYSQTSYGTNSFHFPSHGKPFSLRLALSPSRGILVIGSIGTGRSYLVKYLATNSYVPFITVFPNKFLDKNPQFIDDIDIDNSNNIDASDDIDMDNSDNIDDDIDRDLATELELLTWMNALTMDREMKAEIARLFITLQFELARAMSPCIIWIPNIHDLDVNESNYLSLGLLVNHLSRDCERCSPINILVIASTHIPQKVDPALIAPKKLNTCIKLRRLLIPQQRKYFFTLSYTRGFHLENKMFHTNGFGSITMGPNARDIVALTNEVLSISITQKKSIIDTNTIRSALHRQTWDLQSQVRLVQDHGILFYQIGRAVAQNVLLSNLSNCPIDPISIYLKKKSCNEGDSYLYKWYFELGTSMKKLTILLYLLSCTAGSVAQDLWSLPGPDEKNGITSYGLVENDSDLVHGLLEVEGALVGSSRTEKNCSKFENDRVTLLLRPEPRNPLERRQNGSCSILDQRFLSEKDESEFEEGALAPQQIEEDLFNHIVWAPTIWRPWGFLCIERPNELGFSYWSRSFRGKRILYDEEDELEENDSEFLQSGTMQYKTRDRSSKEKGLFRISQFIWDPADPLFFLFKDRPPGSVFSRLELFADEEMSKGLLTSQTSQIEHLFRYKYPRWFINKTQEKHFEFLIHRQRCLRTNSSLSNRSFRSNTLSESYQYLSNLFLSNGTLLDQMTKTLLRKRWLFPDEMKIGFM.

1579-1586 contacts ATP; that stretch reads GSIGTGRS.

The protein belongs to the Ycf2 family.

The protein resides in the plastid. In terms of biological role, probable ATPase of unknown function. Its presence in a non-photosynthetic plant (Epifagus virginiana) and experiments in tobacco indicate that it has an essential function which is probably not related to photosynthesis. This chain is Protein Ycf2, found in Cuscuta exaltata (Tall dodder).